The sequence spans 281 residues: ATP phosphoribosyltransferase (281 aa).

The protein belongs to the ATP phosphoribosyltransferase family. Long subfamily. Mg(2+) serves as cofactor.

The protein localises to the cytoplasm. The catalysed reaction is 1-(5-phospho-beta-D-ribosyl)-ATP + diphosphate = 5-phospho-alpha-D-ribose 1-diphosphate + ATP. It participates in amino-acid biosynthesis; L-histidine biosynthesis; L-histidine from 5-phospho-alpha-D-ribose 1-diphosphate: step 1/9. With respect to regulation, feedback inhibited by histidine. Catalyzes the condensation of ATP and 5-phosphoribose 1-diphosphate to form N'-(5'-phosphoribosyl)-ATP (PR-ATP). Has a crucial role in the pathway because the rate of histidine biosynthesis seems to be controlled primarily by regulation of HisG enzymatic activity. The chain is ATP phosphoribosyltransferase from Corynebacterium aurimucosum (strain ATCC 700975 / DSM 44827 / CIP 107346 / CN-1) (Corynebacterium nigricans).